The chain runs to 279 residues: Chromatin modification-related protein EAF5 (279 aa).

A disordered region spans residues 147 to 179; sequence QLQPHANAGKSGSAGTSATITTTTPHMAHSMDP. Residues 154 to 170 show a composition bias toward low complexity; that stretch reads AGKSGSAGTSATITTTT.

Belongs to the EAF5 family. As to quaternary structure, component of the NuA4 histone acetyltransferase complex composed of at least ACT1, ARP4, YAF9, VID21, SWC4, EAF3, EAF5, EAF6, EAF7, EPL1, ESA1, TRA1 and YNG2.

The protein localises to the nucleus. Component of the NuA4 histone acetyltransferase complex which is involved in transcriptional activation of selected genes principally by acetylation of nucleosomal histone H4 and H2A. The NuA4 complex is also involved in DNA repair. The protein is Chromatin modification-related protein EAF5 (EAF5) of Saccharomyces cerevisiae (strain ATCC 204508 / S288c) (Baker's yeast).